The chain runs to 203 residues: Protein-L-isoaspartate O-methyltransferase (203 aa).

The active site involves serine 50.

The protein belongs to the methyltransferase superfamily. L-isoaspartyl/D-aspartyl protein methyltransferase family.

Its subcellular location is the cytoplasm. The enzyme catalyses [protein]-L-isoaspartate + S-adenosyl-L-methionine = [protein]-L-isoaspartate alpha-methyl ester + S-adenosyl-L-homocysteine. Functionally, catalyzes the methyl esterification of L-isoaspartyl residues in peptides and proteins that result from spontaneous decomposition of normal L-aspartyl and L-asparaginyl residues. It plays a role in the repair and/or degradation of damaged proteins. This is Protein-L-isoaspartate O-methyltransferase from Methanococcoides burtonii (strain DSM 6242 / NBRC 107633 / OCM 468 / ACE-M).